Consider the following 110-residue polypeptide: Large ribosomal subunit protein uL24 (110 aa).

Belongs to the universal ribosomal protein uL24 family. As to quaternary structure, part of the 50S ribosomal subunit.

Functionally, one of two assembly initiator proteins, it binds directly to the 5'-end of the 23S rRNA, where it nucleates assembly of the 50S subunit. Its function is as follows. One of the proteins that surrounds the polypeptide exit tunnel on the outside of the subunit. The protein is Large ribosomal subunit protein uL24 of Desulfovibrio desulfuricans (strain ATCC 27774 / DSM 6949 / MB).